Consider the following 263-residue polypeptide: Endonuclease 8 (263 aa).

P2 serves as the catalytic Schiff-base intermediate with DNA. The active-site Proton donor is E3. The active-site Proton donor; for beta-elimination activity is K53. The DNA site is built by Q70, R125, and N169. Residues 229–263 form an FPG-type zinc finger; it reads KVFHRDGEPCERCGSIIEKTTLSSRPFYWCPGCQH. The active-site Proton donor; for delta-elimination activity is R253.

Belongs to the FPG family. Zn(2+) serves as cofactor.

It catalyses the reaction 2'-deoxyribonucleotide-(2'-deoxyribose 5'-phosphate)-2'-deoxyribonucleotide-DNA = a 3'-end 2'-deoxyribonucleotide-(2,3-dehydro-2,3-deoxyribose 5'-phosphate)-DNA + a 5'-end 5'-phospho-2'-deoxyribonucleoside-DNA + H(+). Its function is as follows. Involved in base excision repair of DNA damaged by oxidation or by mutagenic agents. Acts as a DNA glycosylase that recognizes and removes damaged bases. Has a preference for oxidized pyrimidines, such as thymine glycol, 5,6-dihydrouracil and 5,6-dihydrothymine. Has AP (apurinic/apyrimidinic) lyase activity and introduces nicks in the DNA strand. Cleaves the DNA backbone by beta-delta elimination to generate a single-strand break at the site of the removed base with both 3'- and 5'-phosphates. The chain is Endonuclease 8 from Shigella sonnei (strain Ss046).